The following is a 730-amino-acid chain: Arginine decarboxylase 1B, chloroplastic (730 aa).

The transit peptide at 1-37 directs the protein to the chloroplast; sequence MPALGCCVDAAVSPPPGYSFLWDSSLPAPEIFPSGVP. N6-(pyridoxal phosphate)lysine is present on K157. Residues S309, G346, and 395–398 each bind pyridoxal 5'-phosphate; that span reads ESGR. 460–461 provides a ligand contact to substrate; the sequence is YA. C548 serves as the catalytic Proton donor; shared with dimeric partner. D549 is a binding site for substrate. Position 590 (Y590) interacts with pyridoxal 5'-phosphate.

This sequence belongs to the Orn/Lys/Arg decarboxylase class-II family. SpeA subfamily. Mg(2+) serves as cofactor. The cofactor is pyridoxal 5'-phosphate.

The protein localises to the plastid. It localises to the chloroplast. The enzyme catalyses L-arginine + H(+) = agmatine + CO2. Its pathway is alkaloid biosynthesis; nicotine biosynthesis. It participates in amine and polyamine biosynthesis; agmatine biosynthesis; agmatine from L-arginine: step 1/1. Its function is as follows. Involved in the biosynthesis of pyridine alkaloid natural products, leading mainly to the production of anabasine, anatabine, nicotine and nornicotine, effective deterrents against herbivores with antiparasitic and pesticide properties (neurotoxins); nornicotine serves as the precursor in the synthesis of the carcinogen compound N'-nitrosonornicotine (NNN). Required for the biosynthesis of putrescine. Catalyzes the first step of polyamine (PA) biosynthesis to produce putrescine from arginine. This chain is Arginine decarboxylase 1B, chloroplastic, found in Nicotiana tabacum (Common tobacco).